The sequence spans 682 residues: tRNA(Met) cytidine acetyltransferase TmcA (682 aa).

ATP contacts are provided by residues Gln-176, 198 to 207 (GRGKSTLAGM), and Arg-320. In terms of domain architecture, N-acetyltransferase spans 357 to 534 (QQQWIQQPEL…SGCYTAMAIF (178 aa)). Acetyl-CoA is bound by residues 462-464 (VAV) and Glu-502.

Belongs to the RNA cytidine acetyltransferase family. TmcA subfamily.

It localises to the cytoplasm. It catalyses the reaction cytidine(34) in elongator tRNA(Met) + acetyl-CoA + ATP + H2O = N(4)-acetylcytidine(34) in elongator tRNA(Met) + ADP + phosphate + CoA + H(+). Catalyzes the formation of N(4)-acetylcytidine (ac(4)C) at the wobble position of tRNA(Met), by using acetyl-CoA as an acetyl donor and ATP (or GTP). The chain is tRNA(Met) cytidine acetyltransferase TmcA from Photorhabdus asymbiotica subsp. asymbiotica (strain ATCC 43949 / 3105-77) (Xenorhabdus luminescens (strain 2)).